Reading from the N-terminus, the 305-residue chain is Dermonecrotic toxin LiSicTox-betaID1 (305 aa).

The signal sequence occupies residues 1-18 (MQLFIILCLAGSAVQLEG). Positions 19 to 26 (TELDGVER) are excised as a propeptide. His38 is a catalytic residue. Residues Glu58 and Asp60 each coordinate Mg(2+). His74 acts as the Nucleophile in catalysis. Cystine bridges form between Cys78/Cys84 and Cys80/Cys223. Mg(2+) is bound at residue Asp118.

The protein belongs to the arthropod phospholipase D family. Class II subfamily. Class IIb sub-subfamily. The cofactor is Mg(2+). As to expression, expressed by the venom gland.

The protein resides in the secreted. It catalyses the reaction an N-(acyl)-sphingosylphosphocholine = an N-(acyl)-sphingosyl-1,3-cyclic phosphate + choline. The catalysed reaction is an N-(acyl)-sphingosylphosphoethanolamine = an N-(acyl)-sphingosyl-1,3-cyclic phosphate + ethanolamine. It carries out the reaction a 1-acyl-sn-glycero-3-phosphocholine = a 1-acyl-sn-glycero-2,3-cyclic phosphate + choline. The enzyme catalyses a 1-acyl-sn-glycero-3-phosphoethanolamine = a 1-acyl-sn-glycero-2,3-cyclic phosphate + ethanolamine. Dermonecrotic toxins cleave the phosphodiester linkage between the phosphate and headgroup of certain phospholipids (sphingolipid and lysolipid substrates), forming an alcohol (often choline) and a cyclic phosphate. This toxin acts on sphingomyelin (SM) with low activity. It may also act on ceramide phosphoethanolamine (CPE), lysophosphatidylcholine (LPC) and lysophosphatidylethanolamine (LPE), but not on lysophosphatidylserine (LPS), and lysophosphatidylglycerol (LPG). It acts by transphosphatidylation, releasing exclusively cyclic phosphate products as second products. Has no or weak activities in inducing dermonecrosis, hemolysis, inflammatory response, platelet aggregation and increase in vessel permeability. In vivo, shows no lethality when injected at higher dose into mice. This chain is Dermonecrotic toxin LiSicTox-betaID1, found in Loxosceles intermedia (Brown spider).